The following is a 130-amino-acid chain: Protachykinin-1 (130 aa).

Residues 1-19 (MKILVAVAVFFLVSTQLFA) form the signal peptide. Positions 20–56 (EEIDANDDLNYWSDWSDSDQIKEAMPEPFEHLLQRIA) are excised as a propeptide. Methionine amide is present on residues Met-68 and Met-107.

This sequence belongs to the tachykinin family. Post-translationally, the substance P form is cleaved at Pro-59 by the prolyl endopeptidase FAP (seprase) activity (in vitro). Substance P is also cleaved and degraded by Angiotensin-converting enzyme (ACE) and neprilysin (MME).

The protein localises to the secreted. Functionally, tachykinins are active peptides which excite neurons, evoke behavioral responses, are potent vasodilators and secretagogues, and contract (directly or indirectly) many smooth muscles. The sequence is that of Protachykinin-1 (Tac1) from Mus musculus (Mouse).